Consider the following 176-residue polypeptide: Macro domain-containing protein mll7730 (176 aa).

The region spanning 1–174 is the Macro domain; sequence MSKALDRIRI…LYLRAVAALR (174 aa).

It belongs to the MacroD-type family.

The sequence is that of Macro domain-containing protein mll7730 from Mesorhizobium japonicum (strain LMG 29417 / CECT 9101 / MAFF 303099) (Mesorhizobium loti (strain MAFF 303099)).